Here is a 963-residue protein sequence, read N- to C-terminus: Kinesin-1 heavy chain (963 aa).

The residue at position 2 (alanine 2) is an N-acetylalanine. Residues 8-325 (NIKVMCRFRP…LLFGQRAKTI (318 aa)) enclose the Kinesin motor domain. 85–92 (GQTSSGKT) provides a ligand contact to ATP. Residue lysine 213 forms a Glycyl lysine isopeptide (Lys-Gly) (interchain with G-Cter in SUMO2) linkage. Residues 330–913 (CVNVELTAEQ…EAVRSKNMAR (584 aa)) adopt a coiled-coil conformation. The interval 908–963 (SKNMARRGHSAQIAKPIRPGQHPAASPTHPGAVRGGGSFVQNNQPVGLRGGGGKQA) is disordered. The segment at 915–963 (GHSAQIAKPIRPGQHPAASPTHPGAVRGGGSFVQNNQPVGLRGGGGKQA) is globular. Residues serine 933 and serine 945 each carry the phosphoserine modification. Arginine 956 bears the Omega-N-methylarginine mark.

It belongs to the TRAFAC class myosin-kinesin ATPase superfamily. Kinesin family. Kinesin subfamily. In terms of assembly, oligomer composed of two heavy chains and two light chains. Interacts with GRIP1 and PPP1R42. Interacts with SYBU. Interacts with JAKMIP1. Interacts with PLEKHM2. Interacts with ECPAS. Interacts with ZFYVE27. Found in a complex with OGT, RHOT1, RHOT2 and TRAK1. Interacts with APP (via cytoplasmic domain). In terms of tissue distribution, expressed in the brain (at protein level). Expressed in the brain, liver, kidney, spleen, heart, lung and sciatic nerve.

The protein resides in the cytoplasm. It is found in the cytoskeleton. Its subcellular location is the cytolytic granule membrane. It localises to the lysosome membrane. Functionally, microtubule-dependent motor required for normal distribution of mitochondria and lysosomes. Can induce formation of neurite-like membrane protrusions in non-neuronal cells in a ZFYVE27-dependent manner. Regulates centrosome and nuclear positioning during mitotic entry. During the G2 phase of the cell cycle in a BICD2-dependent manner, antagonizes dynein function and drives the separation of nuclei and centrosomes. Required for anterograde axonal transportation of MAPK8IP3/JIP3 which is essential for MAPK8IP3/JIP3 function in axon elongation. Through binding with PLEKHM2 and ARL8B, directs lysosome movement toward microtubule plus ends. Involved in NK cell-mediated cytotoxicity. Drives the polarization of cytolytic granules and microtubule-organizing centers (MTOCs) toward the immune synapse between effector NK lymphocytes and target cells. In Rattus norvegicus (Rat), this protein is Kinesin-1 heavy chain.